A 70-amino-acid chain; its full sequence is Large ribosomal subunit protein bL31 (70 aa).

Positions 16, 18, 37, and 40 each coordinate Zn(2+).

This sequence belongs to the bacterial ribosomal protein bL31 family. Type A subfamily. As to quaternary structure, part of the 50S ribosomal subunit. The cofactor is Zn(2+).

In terms of biological role, binds the 23S rRNA. This Pasteurella multocida (strain Pm70) protein is Large ribosomal subunit protein bL31.